The sequence spans 93 residues: GWPAYPGSNGIRSSVCQKKLGCGSKNLASLGVCKAFCLGRKRFWQKCGKNGSSGKGSRICNPVLAHAVEKAGKGLIKVTDMAVAAIVKYAGKK.

3 disulfides stabilise this stretch: Cys16–Cys37, Cys22–Cys33, and Cys47–Cys60.

Belongs to the worm cytolysin family. In terms of tissue distribution, localized within the skin and proboscis and are most readily isolated from body mucus secretions.

It is found in the secreted. Its function is as follows. Cytolysin that shows hemolytic activity (on bovine erythrocytes, HC(50)=5.75 mg/ml). This hemolytic activity is completely inhibited by small unilamelar vesicles composed of PC/PG, PC/PI and PC/PS in 1:1 molar ratios (with at least 100 mg/ml concentration). This Parborlasia corrugatus (Antarctic nemertean worm) protein is Parbolysin P5.